A 339-amino-acid polypeptide reads, in one-letter code: ATPase GET3 (339 aa).

Residue 34-41 coordinates ATP; it reads KGGVGKTT. Residue aspartate 63 is part of the active site. ATP is bound by residues glutamate 244 and asparagine 271. Zn(2+) contacts are provided by cysteine 282 and cysteine 285.

This sequence belongs to the arsA ATPase family. Homodimer.

The protein resides in the cytoplasm. It is found in the endoplasmic reticulum. Its function is as follows. ATPase required for the post-translational delivery of tail-anchored (TA) proteins to the endoplasmic reticulum. Recognizes and selectively binds the transmembrane domain of TA proteins in the cytosol. This complex then targets to the endoplasmic reticulum by membrane-bound receptors, where the tail-anchored protein is released for insertion. This process is regulated by ATP binding and hydrolysis. ATP binding drives the homodimer towards the closed dimer state, facilitating recognition of newly synthesized TA membrane proteins. ATP hydrolysis is required for insertion. Subsequently, the homodimer reverts towards the open dimer state, lowering its affinity for the membrane-bound receptor, and returning it to the cytosol to initiate a new round of targeting. The chain is ATPase GET3 from Podospora anserina (strain S / ATCC MYA-4624 / DSM 980 / FGSC 10383) (Pleurage anserina).